Reading from the N-terminus, the 338-residue chain is Ketol-acid reductoisomerase (NADP(+)) (338 aa).

Positions 1–181 (MKVFYDKDAD…GGGRAGIIET (181 aa)) constitute a KARI N-terminal Rossmann domain. NADP(+) contacts are provided by residues 24-27 (YGSQ), arginine 47, and serine 52. Histidine 107 is a catalytic residue. Residue glycine 133 coordinates NADP(+). Residues 182–327 (NFREETETDL…SKLRAMMPWI (146 aa)) enclose the KARI C-terminal knotted domain. Mg(2+)-binding residues include aspartate 190, glutamate 194, glutamate 226, and glutamate 230. Serine 251 is a substrate binding site.

The protein belongs to the ketol-acid reductoisomerase family. The cofactor is Mg(2+).

The catalysed reaction is (2R)-2,3-dihydroxy-3-methylbutanoate + NADP(+) = (2S)-2-acetolactate + NADPH + H(+). It carries out the reaction (2R,3R)-2,3-dihydroxy-3-methylpentanoate + NADP(+) = (S)-2-ethyl-2-hydroxy-3-oxobutanoate + NADPH + H(+). It participates in amino-acid biosynthesis; L-isoleucine biosynthesis; L-isoleucine from 2-oxobutanoate: step 2/4. Its pathway is amino-acid biosynthesis; L-valine biosynthesis; L-valine from pyruvate: step 2/4. Involved in the biosynthesis of branched-chain amino acids (BCAA). Catalyzes an alkyl-migration followed by a ketol-acid reduction of (S)-2-acetolactate (S2AL) to yield (R)-2,3-dihydroxy-isovalerate. In the isomerase reaction, S2AL is rearranged via a Mg-dependent methyl migration to produce 3-hydroxy-3-methyl-2-ketobutyrate (HMKB). In the reductase reaction, this 2-ketoacid undergoes a metal-dependent reduction by NADPH to yield (R)-2,3-dihydroxy-isovalerate. This is Ketol-acid reductoisomerase (NADP(+)) from Burkholderia mallei (strain NCTC 10229).